We begin with the raw amino-acid sequence, 260 residues long: uncharacterized protein (260 aa).

This is an uncharacterized protein from Saccharomyces cerevisiae (strain ATCC 204508 / S288c) (Baker's yeast).